Here is a 126-residue protein sequence, read N- to C-terminus: Large ribosomal subunit protein bL12 (126 aa).

This sequence belongs to the bacterial ribosomal protein bL12 family. As to quaternary structure, homodimer. Part of the ribosomal stalk of the 50S ribosomal subunit. Forms a multimeric L10(L12)X complex, where L10 forms an elongated spine to which 2 to 4 L12 dimers bind in a sequential fashion. Binds GTP-bound translation factors.

Its function is as follows. Forms part of the ribosomal stalk which helps the ribosome interact with GTP-bound translation factors. Is thus essential for accurate translation. This Teredinibacter turnerae (strain ATCC 39867 / T7901) protein is Large ribosomal subunit protein bL12.